Here is a 489-residue protein sequence, read N- to C-terminus: GTPase Der (489 aa).

EngA-type G domains lie at 3–166 and 195–368; these read PVIA…PKDE and IKIA…KSAV. GTP-binding positions include 9–16, 56–60, 118–121, 201–208, 248–252, and 313–316; these read GRPNVGKS, DTGGI, NKID, DTAGV, and NKWD. In terms of domain architecture, KH-like spans 369–453; it reads TRWPTSRLTQ…PIRIEFKGGE (85 aa). The interval 451 to 489 is disordered; that stretch reads GGENPYEGNKNTLTDRQVNKKRRMMSHHKKADKKRRDKR. The span at 469–489 shows a compositional bias: basic residues; that stretch reads NKKRRMMSHHKKADKKRRDKR.

This sequence belongs to the TRAFAC class TrmE-Era-EngA-EngB-Septin-like GTPase superfamily. EngA (Der) GTPase family. In terms of assembly, associates with the 50S ribosomal subunit.

Functionally, GTPase that plays an essential role in the late steps of ribosome biogenesis. This Pseudomonas syringae pv. tomato (strain ATCC BAA-871 / DC3000) protein is GTPase Der.